Consider the following 171-residue polypeptide: ATP synthase subunit b (171 aa).

The helical transmembrane segment at 2–22 (FVVKMVLGFLILLSPLCATGL) threads the bilayer.

Belongs to the ATPase B chain family. F-type ATPases have 2 components, F(1) - the catalytic core - and F(0) - the membrane proton channel. F(1) has five subunits: alpha(3), beta(3), gamma(1), delta(1), epsilon(1). F(0) has three main subunits: a(1), b(2) and c(10-14). The alpha and beta chains form an alternating ring which encloses part of the gamma chain. F(1) is attached to F(0) by a central stalk formed by the gamma and epsilon chains, while a peripheral stalk is formed by the delta and b chains.

The protein resides in the cell inner membrane. Its function is as follows. F(1)F(0) ATP synthase produces ATP from ADP in the presence of a proton or sodium gradient. F-type ATPases consist of two structural domains, F(1) containing the extramembraneous catalytic core and F(0) containing the membrane proton channel, linked together by a central stalk and a peripheral stalk. During catalysis, ATP synthesis in the catalytic domain of F(1) is coupled via a rotary mechanism of the central stalk subunits to proton translocation. Component of the F(0) channel, it forms part of the peripheral stalk, linking F(1) to F(0). The chain is ATP synthase subunit b from Helicobacter pylori (strain J99 / ATCC 700824) (Campylobacter pylori J99).